A 215-amino-acid chain; its full sequence is Glutathione S-transferase stcT (215 aa).

The GST N-terminal domain occupies 2 to 82 (PFGTLYTRPF…YDSNTTLLGT (81 aa)). Positions 52 and 66 each coordinate glutathione. Lys-52 contacts substrate. The region spanning 83 to 211 (TGQEYASIIR…PVLAEYEMPI (129 aa)) is the GST C-terminal domain.

Belongs to the GST superfamily. It depends on glutathione as a cofactor.

It functions in the pathway mycotoxin biosynthesis; sterigmatocystin biosynthesis. Functionally, glutathione S-transferase; part of the gene cluster that mediates the biosynthesis of sterigmatocystin (ST), a polyketide-derived furanocoumarin which is part of the most toxic and carcinogenic compounds among the known mycotoxins. The first step in the biosynthesis of sterigmatocystin is the production of hexanoate by the fatty acid synthase (FAS) units stcJ and stcK. The polyketide backbone is assembled by the non-reducing polyketide synthase stcA by condensation of the starter hexanoyl-CoA and 7 malonyl-CoA extender units followed by cyclization and release of norsolorinic acid. Norsolorinic acid is the first stable intermediate in the biosynthesis of sterigmatocystin and is converted into averantin (AVN) by the ketoreductase stcE which reduces the hexanoate ketone to an alcohol. Averantin is then oxidized into 5'-hydroxyaverantin (HAVN) by the cytochrome P450 monooxygenase stcF. 5'-hydroxyaverantin is further converted to 5'-oxyaverantin (OAVN) by the 5'-hydroxyaverantin dehydrogenase stcG. The next step is the conversion of OAVN into averufin (AVF) which is catalyzed by a yet to be identified enzyme. The cytochrome P450 monooxygenase stcB and the flavin-binding monooxygenase stcW are both required for the conversion of averufin to 1-hydroxyversicolorone. The esterase stcI probably catalyzes the formation of versiconal hemiacetal acetate from 1-hydroxyversicolorone. The oxydoreductase stcN then probably catalyzes the biosynthetic step from versiconal to versicolorin B (VERB). The next step is performed by the versicolorin B desaturase stcL to produce versicolorin A (VERA). The ketoreductase stcU and the cytochrome P450 monooxygenase stcS are involved in the conversion of versicolorin A to demethylsterigmatocystin. The Baeyer-Villiger oxidas stcQ and the reductase stcR might be involved in the biosynthetic step from versicolorin A to demethylsterigmatocystin. The final step in the biosynthesis of sterigmatocystin is the methylation of demethylsterigmatocystin catalyzed by the methyltransferase stcP. The sequence is that of Glutathione S-transferase stcT from Emericella nidulans (strain FGSC A4 / ATCC 38163 / CBS 112.46 / NRRL 194 / M139) (Aspergillus nidulans).